The sequence spans 120 residues: Putative ankyrin repeat protein RBE_1215 (120 aa).

2 ANK repeats span residues 22 to 52 and 59 to 88; these read DGGN…LTNI and FGDT…ITSV.

This Rickettsia bellii (strain RML369-C) protein is Putative ankyrin repeat protein RBE_1215.